Consider the following 403-residue polypeptide: Peptidyl-prolyl cis-trans isomerase FKBP8 (403 aa).

A disordered region spans residues 26 to 54 (VLDGVDDAEEEDDLSGLPPLEDMGQPTVE). Residues 28-39 (DGVDDAEEEDDL) show a composition bias toward acidic residues. Positions 110–195 (GQVVTVHLQM…CLEVTLKTAE (86 aa)) constitute a PPIase FKBP-type domain. The TPR 1 repeat unit spans residues 212-245 (ANRKRECGNAHYQRADFVLAANSYDLAIKAITSN). Glycyl lysine isopeptide (Lys-Gly) (interchain with G-Cter in ubiquitin) cross-links involve residues lysine 240, lysine 262, lysine 264, and lysine 275. TPR repeat units lie at residues 263–296 (VKCLNNLAASQLKLDHYRAALRSCSQVLEHQPDN) and 297–330 (IKALFRKGKVLAQQGEYSEAIPILRAALKLEPSN). Serine 287 is subject to Phosphoserine. Residues lysine 298, lysine 305, lysine 325, lysine 331, lysine 339, lysine 342, and lysine 343 each participate in a glycyl lysine isopeptide (Lys-Gly) (interchain with G-Cter in ubiquitin) cross-link. The helical transmembrane segment at 381–401 (WLFGATAVALGGVALSVVIAA) threads the bilayer.

As to quaternary structure, homomultimers or heteromultimers (Potential). Forms heterodimer with calmodulin. When activated by calmodulin and calcium, interacts with the BH4 domain of BCL2 and weakly with BCLX isoform Bcl-X(L). Does not bind and inhibit calcineurin. Interacts with ZFYVE27; may negatively regulate ZFYVE27 phosphorylation. It depends on Ca(2+) as a cofactor. In terms of processing, ubiquitinated by PRKN during mitophagy, leading to its degradation and enhancement of mitophagy. Deubiquitinated by USP30.

It is found in the mitochondrion membrane. It carries out the reaction [protein]-peptidylproline (omega=180) = [protein]-peptidylproline (omega=0). In terms of biological role, constitutively inactive PPiase, which becomes active when bound to calmodulin and calcium. Seems to act as a chaperone for BCL2, targets it to the mitochondria and modulates its phosphorylation state. The BCL2/FKBP8/calmodulin/calcium complex probably interferes with the binding of BCL2 to its targets. The active form of FKBP8 may therefore play a role in the regulation of apoptosis. The sequence is that of Peptidyl-prolyl cis-trans isomerase FKBP8 (Fkbp8) from Rattus norvegicus (Rat).